Reading from the N-terminus, the 183-residue chain is MERIKNFTSSKMDHCVHMFVNQLNTLRSSRASPSILDTILIDYLGQKIQLKKLSNIIVENVNTLRITLFDPKIKNNVEKAIISSKLDLIPIFINNYFQIKIPVLTEERRLQLIKLAKKMAENSRICIRNIRRLSNEKIKLFLKDKIISSDKERRLQHEVQDITNSYMEKINVILSKKEKDLLK.

It belongs to the RRF family.

The protein localises to the cytoplasm. In terms of biological role, responsible for the release of ribosomes from messenger RNA at the termination of protein biosynthesis. May increase the efficiency of translation by recycling ribosomes from one round of translation to another. This is Ribosome-recycling factor from Buchnera aphidicola subsp. Baizongia pistaciae (strain Bp).